The following is a 314-amino-acid chain: Olfactory receptor 5P81 (314 aa).

Over 1 to 28 (MAFLEDGNHTVVTEFILLGLTDDPVLRV) the chain is Extracellular. Asparagine 8 carries N-linked (GlcNAc...) asparagine glycosylation. A helical membrane pass occupies residues 29-49 (ILFIIILCIYLVTVSGNLSTI). The Cytoplasmic segment spans residues 50 to 57 (LLIRVSSQ). A helical membrane pass occupies residues 58 to 78 (LHHPMYFFLSHLASIDIAISS). The Extracellular portion of the chain corresponds to 79–102 (SVTPNMVVNFLVERSSISYIGCGI). Residues cysteine 100 and cysteine 192 are joined by a disulfide bond. Residues 103–123 (QLGSAVFFGAIECFLLAVMAY) form a helical membrane-spanning segment. Residues 124–136 (DRFVAICNPLLYS) lie on the Cytoplasmic side of the membrane. The helical transmembrane segment at 137 to 157 (TKMSKQVCIQLLVGSYIGGFI) threads the bilayer. The Extracellular segment spans residues 158-199 (HASFFTLSFVSFLFCGPNRINHFFCDFTPLVELSCSDNSVLI). The helical transmembrane segment at 200–220 (ILDSFSTGTIIVITVFVIAIS) threads the bilayer. At 221–240 (YTCILITILKMHSTEGRHKA) the chain is on the cytoplasmic side. A helical transmembrane segment spans residues 241–261 (FSTCTSHLTVVTLLYGTVTFI). At 262-274 (YVMPKSSYSTDQN) the chain is on the extracellular side. A helical membrane pass occupies residues 275–295 (KVISVFYMVVIPMLNPIIYSL). Topologically, residues 296 to 314 (RNNEIKGALKKQLGEKNIF) are cytoplasmic.

Belongs to the G-protein coupled receptor 1 family.

It is found in the cell membrane. Its function is as follows. Potential odorant receptor. This Mus musculus (Mouse) protein is Olfactory receptor 5P81.